A 641-amino-acid chain; its full sequence is Glycerol metabolism operon regulatory protein (641 aa).

A sensor domain region spans residues 1-318 (MTTHTQDIGK…MRQLMTSQLG (318 aa)). One can recognise a GAF domain in the interval 52–189 (ALLTIAQAAL…AIAREVGNSL (138 aa)). In terms of domain architecture, PAS spans 203–265 (NQMYGLLESM…MLLRRAIKHA (63 aa)). Residues 327-552 (MSTDDPETRR…LNSIIENIAI (226 aa)) enclose the Sigma-54 factor interaction domain. ATP is bound by residues 355 to 362 (GEEGVGKE) and 415 to 424 (ANGGTLFLEK).

Transcriptional activator of the glycerol utilization dha operon. This chain is Glycerol metabolism operon regulatory protein, found in Citrobacter freundii.